Here is a 512-residue protein sequence, read N- to C-terminus: MRRLWGPGTPFLALLLLVSIKQVTTGSLLEETVQKWAQYKETCLKDLLEKPSGVFCNGTFDKYVCWPHSFPGNVSVPCPSYLPWWNKESPGRAYRHCLAQGTWQKQENSTDTWQDESECSENHSFKQNVDHYHHTLLSTLQLMYTVGYSLSLISLFLALTLFLFLRKLHCTRNYIHMNLFASFILRALVVLVKDMVFYNSYSRRPDSESGWMSYLSEISASCRSVQVLLHYFVGTNHLWLLVEGLYLHALLEPTVLPERRLWPKYLVVGWAFPMLFVIPWIFVRASLENTGCWAVNENKKIWWIIRGPILLCVTVNFFIFLKILKLLISKFRAHQMCFRDYKYRLAKSTLLLILLMGVHEFLFTFFTDDQVQGFSRLIRLFIQLTLSSFHGFLVALQYGFASREVKAELRKTWGRFLLARHWGCRACVLGKNFRFLGKCSKKLSEGDGAETLQKLQSSGVSSHLTAGNLRDHGAQPHRGRGAWPRASSLSESSEGDFTLANTMEEILEESEI.

At 1–135 (MRRLWGPGTP…KQNVDHYHHT (135 aa)) the chain is on the extracellular side. Cystine bridges form between Cys-43–Cys-65, Cys-56–Cys-97, and Cys-78–Cys-119. N-linked (GlcNAc...) asparagine glycosylation is present at Asn-73. Residues 136–160 (LLSTLQLMYTVGYSLSLISLFLALT) form a helical membrane-spanning segment. The Cytoplasmic portion of the chain corresponds to 161–172 (LFLFLRKLHCTR). A helical membrane pass occupies residues 173 to 197 (NYIHMNLFASFILRALVVLVKDMVF). Residues 198 to 223 (YNSYSRRPDSESGWMSYLSEISASCR) lie on the Extracellular side of the membrane. Residues 224–247 (SVQVLLHYFVGTNHLWLLVEGLYL) traverse the membrane as a helical segment. The Cytoplasmic portion of the chain corresponds to 248 to 261 (HALLEPTVLPERRL). A helical transmembrane segment spans residues 262 to 283 (WPKYLVVGWAFPMLFVIPWIFV). Over 284–301 (RASLENTGCWAVNENKKI) the chain is Extracellular. Residues 302–324 (WWIIRGPILLCVTVNFFIFLKIL) traverse the membrane as a helical segment. Over 325 to 348 (KLLISKFRAHQMCFRDYKYRLAKS) the chain is Cytoplasmic. The helical transmembrane segment at 349-367 (TLLLILLMGVHEFLFTFFT) threads the bilayer. Over 368-379 (DDQVQGFSRLIR) the chain is Extracellular. The chain crosses the membrane as a helical span at residues 380 to 400 (LFIQLTLSSFHGFLVALQYGF). At 401–512 (ASREVKAELR…MEEILEESEI (112 aa)) the chain is on the cytoplasmic side. The disordered stretch occupies residues 458–494 (SGVSSHLTAGNLRDHGAQPHRGRGAWPRASSLSESSE).

The protein belongs to the G-protein coupled receptor 2 family.

It is found in the cell membrane. In terms of biological role, this is a receptor for glucagon-like peptide 2. The activity of this receptor is mediated by G proteins which activate adenylyl cyclase. The polypeptide is Glucagon-like peptide 2 receptor (Glp2r) (Mus musculus (Mouse)).